The following is a 388-amino-acid chain: Nitric oxide reductase FlRd-NAD(+) reductase (388 aa).

This sequence belongs to the FAD-dependent oxidoreductase family. Requires FAD as cofactor.

The protein resides in the cytoplasm. The catalysed reaction is 2 reduced [nitric oxide reductase rubredoxin domain] + NAD(+) + H(+) = 2 oxidized [nitric oxide reductase rubredoxin domain] + NADH. It functions in the pathway nitrogen metabolism; nitric oxide reduction. One of at least two accessory proteins for anaerobic nitric oxide (NO) reductase. Reduces the rubredoxin moiety of NO reductase. In Aeromonas hydrophila subsp. hydrophila (strain ATCC 7966 / DSM 30187 / BCRC 13018 / CCUG 14551 / JCM 1027 / KCTC 2358 / NCIMB 9240 / NCTC 8049), this protein is Nitric oxide reductase FlRd-NAD(+) reductase.